Consider the following 358-residue polypeptide: Ferredoxin--NADP reductase (358 aa).

Positions 38, 46, 51, 91, 126, 301, and 341 each coordinate FAD.

This sequence belongs to the ferredoxin--NADP reductase type 2 family. In terms of assembly, homodimer. Requires FAD as cofactor.

It carries out the reaction 2 reduced [2Fe-2S]-[ferredoxin] + NADP(+) + H(+) = 2 oxidized [2Fe-2S]-[ferredoxin] + NADPH. In Paracidovorax citrulli (strain AAC00-1) (Acidovorax citrulli), this protein is Ferredoxin--NADP reductase.